The sequence spans 481 residues: WD repeat-containing protein 55 homolog (481 aa).

Residues 1 to 116 are disordered; sequence MHTHNHFKTP…NRDVETNFDL (116 aa). Composition is skewed to acidic residues over residues 12–23, 31–46, and 68–81; these read DAEEVDDLDDEM, IEQEVLFESDSDDDGF, and DSFDPNAEDSDSDD. WD repeat units follow at residues 144–183, 188–227, 231–269, 272–311, 314–353, and 398–437; these read KLEDFVTDISFHPERNIIALATIIGDVHLYEYANEGNKLI, VHSKACRDVEFTEDGRNLLTCSKDKCVMVTDMETEKLKKL, AHDDAINTLHVLNENLFATGDDAGTVKLWDLRTKQHVFE, QIDDQVTQLLSNEQNTLLLATSADGYLTTFNIPGRKLYVQ, PYEEELNCMGIYRGDSKLVVGTSKGKLYSYNWGSFGYHCD, and QHNMPIEALDVNSTGELLASSSHNNDVRFWNVKYFEDFGD.

It belongs to the WD repeat WDR55 family.

This Drosophila ananassae (Fruit fly) protein is WD repeat-containing protein 55 homolog.